We begin with the raw amino-acid sequence, 269 residues long: Hydroxyethylthiazole kinase (269 aa).

Met-46 serves as a coordination point for substrate. Arg-121 and Thr-166 together coordinate ATP. Gly-193 lines the substrate pocket.

It belongs to the Thz kinase family. Mg(2+) is required as a cofactor.

It catalyses the reaction 5-(2-hydroxyethyl)-4-methylthiazole + ATP = 4-methyl-5-(2-phosphooxyethyl)-thiazole + ADP + H(+). It participates in cofactor biosynthesis; thiamine diphosphate biosynthesis; 4-methyl-5-(2-phosphoethyl)-thiazole from 5-(2-hydroxyethyl)-4-methylthiazole: step 1/1. In terms of biological role, catalyzes the phosphorylation of the hydroxyl group of 4-methyl-5-beta-hydroxyethylthiazole (THZ). The polypeptide is Hydroxyethylthiazole kinase (Limosilactobacillus reuteri (strain DSM 20016) (Lactobacillus reuteri)).